We begin with the raw amino-acid sequence, 315 residues long: Alpha- and gamma-adaptin-binding protein p34 (315 aa).

The tract at residues 197–233 (IGSADPCHPEQPHLPAADRTESLSDHRGGASNTTDAQ) is disordered. Residues 203-224 (CHPEQPHLPAADRTESLSDHRG) show a composition bias toward basic and acidic residues. Phosphoserine occurs at positions 310 and 311.

Associated with AP-1 and AP-2 complexes.

It is found in the cytoplasm. The protein resides in the cytosol. Functionally, may be involved in endocytic recycling of growth factor receptors such as EGFR. The protein is Alpha- and gamma-adaptin-binding protein p34 (AAGAB) of Pongo abelii (Sumatran orangutan).